The chain runs to 131 residues: Profilin-8 (131 aa).

C13 and C115 are oxidised to a cystine. An Involved in PIP2 interaction motif is present at residues 81-97; sequence AVIRGKKGSGGITVKKT. Phosphothreonine is present on T111.

Belongs to the profilin family. In terms of assembly, occurs in many kinds of cells as a complex with monomeric actin in a 1:1 ratio. In terms of processing, phosphorylated by MAP kinases.

The protein resides in the cytoplasm. It localises to the cytoskeleton. Its function is as follows. Binds to actin and affects the structure of the cytoskeleton. At high concentrations, profilin prevents the polymerization of actin, whereas it enhances it at low concentrations. This is Profilin-8 from Zea mays (Maize).